Consider the following 401-residue polypeptide: Serine/threonine transporter SstT (401 aa).

The next 8 membrane-spanning stretches (helical) occupy residues 17–37 (IGIG…ITVI), 40–60 (FGSL…LTLV), 78–98 (VICL…GASY), 138–158 (ALAT…GLAF), 179–199 (VVGW…FDTI), 212–232 (LLLL…NPLI), 295–315 (MAGA…TLGI), and 336–356 (ASGV…LFGI).

The protein belongs to the dicarboxylate/amino acid:cation symporter (DAACS) (TC 2.A.23) family.

The protein localises to the cell membrane. The enzyme catalyses L-serine(in) + Na(+)(in) = L-serine(out) + Na(+)(out). The catalysed reaction is L-threonine(in) + Na(+)(in) = L-threonine(out) + Na(+)(out). Functionally, involved in the import of serine and threonine into the cell, with the concomitant import of sodium (symport system). The polypeptide is Serine/threonine transporter SstT (Streptococcus suis (strain 98HAH33)).